Reading from the N-terminus, the 201-residue chain is MFVSRLAASGLLLLALLAVSLDGKPVQQWSQNWPGPKVPPLVVQQWSQNWPHPQIPPLVVQNWKSPTQLQPRESPAGGTTALREELSLGPDAALDTPPAGPDVGPRGSKAAAAPQRLSKSKGASATSTASRPMRDLRTDGKQARQNWGRMLNPDHHSAPGGGGGGGGGGARRLKGLAKKRAGSGCFGLKLDRIGSMSGLGC.

The signal sequence occupies residues 1–23 (MFVSRLAASGLLLLALLAVSLDG). Positions 24-47 (KPVQQWSQNWPGPKVPPLVVQQWS) are excised as a propeptide. Position 48 is a pyrrolidone carboxylic acid (Gln48). A propeptide spanning residues 58–60 (LVV) is cleaved from the precursor. Gln61 is subject to Pyrrolidone carboxylic acid. 2 propeptides span residues 67 to 95 (TQLQ…AALD) and 107 to 179 (GSKA…LAKK). Residues 90–172 (PDAALDTPPA…GGGGGGGARR (83 aa)) are disordered. Low complexity predominate over residues 120–130 (SKGASATSTAS). Positions 132 to 142 (PMRDLRTDGKQ) are enriched in basic and acidic residues. The segment covering 159–170 (PGGGGGGGGGGA) has biased composition (gly residues). Residues Cys185 and Cys201 are joined by a disulfide bond.

This sequence in the N-terminal section; belongs to the bradykinin-potentiating peptide family. It in the central section; belongs to the bradykinin inhibitor peptide family. In the C-terminal section; belongs to the natriuretic peptide family. As to expression, venom gland.

Its subcellular location is the secreted. Functionally, inhibits the activity of the angiotensin-converting enzyme (ACE) by a preferential interaction with its C-domain. May also potentiate the hypotensive effects of bradykinin. In terms of biological role, antagonizes the vasodilatory actions of bradykinin at the B2 bradykinin receptor. Its function is as follows. has a vasorelaxant activity in rat aortic strips and a diuretic potency in anesthetized rats. May act by activating natriuretic receptors (NPR1 and/or NPR2). This chain is Bradykinin potentiating and C-type natriuretic peptides, found in Sistrurus catenatus edwardsii (Desert massasauga).